The following is a 181-amino-acid chain: Ribonuclease M5 (181 aa).

Positions 3–86 constitute a Toprim domain; the sequence is KEVIVVEGRD…AYISQEEGTK (84 aa). The Mg(2+) site is built by Glu-9, Asp-55, and Asp-57.

It belongs to the ribonuclease M5 family. Requires Mg(2+) as cofactor.

Its subcellular location is the cytoplasm. The enzyme catalyses Endonucleolytic cleavage of RNA, removing 21 and 42 nucleotides, respectively, from the 5'- and 3'-termini of a 5S-rRNA precursor.. Its function is as follows. Required for correct processing of both the 5' and 3' ends of 5S rRNA precursor. Cleaves both sides of a double-stranded region yielding mature 5S rRNA in one step. This Clostridium botulinum (strain Hall / ATCC 3502 / NCTC 13319 / Type A) protein is Ribonuclease M5.